A 654-amino-acid polypeptide reads, in one-letter code: Meiotically up-regulated gene 24 protein (654 aa).

One can recognise an RRM 1 domain in the interval 299–355 (RNVFIGNLPSSYHEKEIEEAFGKFGKIEHIKILSKKNIAFVHFLNIRDAIKVVRTLS). The disordered stretch occupies residues 383–404 (SCFTSKQNPDTTSDRCRQQESK). The segment covering 384-393 (CFTSKQNPDT) has biased composition (polar residues). Residues 394 to 404 (TSDRCRQQESK) show a composition bias toward basic and acidic residues. 2 RRM domains span residues 409–482 (RTVF…WGKE) and 500–571 (RNVY…YAPD).

It is found in the cytoplasm. Functionally, has a role in meiosis. The protein is Meiotically up-regulated gene 24 protein (mug24) of Schizosaccharomyces pombe (strain 972 / ATCC 24843) (Fission yeast).